The following is a 143-amino-acid chain: Ribosome-binding factor A (143 aa).

A compositionally biased stretch (basic and acidic residues) spans 116-128 (SDDEAKQKQHGDQ). The disordered stretch occupies residues 116 to 143 (SDDEAKQKQHGDQQDVSQSSDDKSEGED).

Belongs to the RbfA family. As to quaternary structure, monomer. Binds 30S ribosomal subunits, but not 50S ribosomal subunits or 70S ribosomes.

It is found in the cytoplasm. In terms of biological role, one of several proteins that assist in the late maturation steps of the functional core of the 30S ribosomal subunit. Associates with free 30S ribosomal subunits (but not with 30S subunits that are part of 70S ribosomes or polysomes). Required for efficient processing of 16S rRNA. May interact with the 5'-terminal helix region of 16S rRNA. In Shewanella sediminis (strain HAW-EB3), this protein is Ribosome-binding factor A.